The primary structure comprises 192 residues: Pyridoxal 5'-phosphate synthase subunit PdxT (192 aa).

50–52 (GES) is a binding site for L-glutamine. The Nucleophile role is filled by C82. L-glutamine is bound by residues R109 and 136–137 (IR). Active-site charge relay system residues include H172 and E174.

Belongs to the glutaminase PdxT/SNO family. In the presence of PdxS, forms a dodecamer of heterodimers. Only shows activity in the heterodimer.

It catalyses the reaction aldehydo-D-ribose 5-phosphate + D-glyceraldehyde 3-phosphate + L-glutamine = pyridoxal 5'-phosphate + L-glutamate + phosphate + 3 H2O + H(+). The catalysed reaction is L-glutamine + H2O = L-glutamate + NH4(+). Its pathway is cofactor biosynthesis; pyridoxal 5'-phosphate biosynthesis. Catalyzes the hydrolysis of glutamine to glutamate and ammonia as part of the biosynthesis of pyridoxal 5'-phosphate. The resulting ammonia molecule is channeled to the active site of PdxS. This Haemophilus influenzae (strain PittEE) protein is Pyridoxal 5'-phosphate synthase subunit PdxT.